The chain runs to 490 residues: Kinetochore protein Nuf2 homolog (490 aa).

2 coiled-coil regions span residues 146–280 (DRKF…KLEA) and 310–407 (DLID…SETI). Disordered regions lie at residues 346–365 (QSET…EERQ) and 468–490 (IDAG…SVFK).

This sequence belongs to the NUF2 family. As to quaternary structure, component of the NDC80 complex, which is composed of at least ndc-80 and him-10. The NDC80 complex interacts with knl-1.

It is found in the nucleus. It localises to the chromosome. Its subcellular location is the centromere. The protein localises to the kinetochore. Its function is as follows. Acts as a component of the essential kinetochore-associated NDC80 complex, which is required for chromosome segregation in mitosis and meiosis and spindle checkpoint activity. The ndc-80 complex synergistically enhances the affinity of the ska-1 complex for microtubules and may allow the ndc-80 complex to track depolymerizing microtubules. The chain is Kinetochore protein Nuf2 homolog (him-10) from Caenorhabditis elegans.